Consider the following 375-residue polypeptide: 4-hydroxy-3-methylbut-2-en-1-yl diphosphate synthase (flavodoxin) (375 aa).

[4Fe-4S] cluster-binding residues include cysteine 270, cysteine 273, cysteine 305, and glutamate 312.

Belongs to the IspG family. Requires [4Fe-4S] cluster as cofactor.

It catalyses the reaction (2E)-4-hydroxy-3-methylbut-2-enyl diphosphate + oxidized [flavodoxin] + H2O + 2 H(+) = 2-C-methyl-D-erythritol 2,4-cyclic diphosphate + reduced [flavodoxin]. Its pathway is isoprenoid biosynthesis; isopentenyl diphosphate biosynthesis via DXP pathway; isopentenyl diphosphate from 1-deoxy-D-xylulose 5-phosphate: step 5/6. Functionally, converts 2C-methyl-D-erythritol 2,4-cyclodiphosphate (ME-2,4cPP) into 1-hydroxy-2-methyl-2-(E)-butenyl 4-diphosphate. The chain is 4-hydroxy-3-methylbut-2-en-1-yl diphosphate synthase (flavodoxin) from Yersinia pestis (strain Pestoides F).